The chain runs to 786 residues: LPS-assembly protein LptD (786 aa).

An N-terminal signal peptide occupies residues 1–39 (MPPKPLFPNVFPGDGAPRKRRLALALLAVPGLVPAVSYA). The interval 767 to 786 (PGYTPLPPPPPPMSRFSNYE) is disordered. Residues 770–779 (TPLPPPPPPM) show a composition bias toward pro residues.

It belongs to the LptD family. Component of the lipopolysaccharide transport and assembly complex. Interacts with LptE and LptA.

It localises to the cell outer membrane. Its function is as follows. Together with LptE, is involved in the assembly of lipopolysaccharide (LPS) at the surface of the outer membrane. The polypeptide is LPS-assembly protein LptD (Burkholderia cenocepacia (strain HI2424)).